The sequence spans 84 residues: UPF0386 protein NGR_c10980 (84 aa).

It belongs to the UPF0386 family.

The polypeptide is UPF0386 protein NGR_c10980 (Sinorhizobium fredii (strain NBRC 101917 / NGR234)).